A 294-amino-acid polypeptide reads, in one-letter code: Ribosomal RNA small subunit methyltransferase H (294 aa).

Residues 31–33, Asp49, Phe76, Asp97, and Gln104 contribute to the S-adenosyl-L-methionine site; that span reads GGY.

Belongs to the methyltransferase superfamily. RsmH family.

The protein localises to the cytoplasm. The catalysed reaction is cytidine(1402) in 16S rRNA + S-adenosyl-L-methionine = N(4)-methylcytidine(1402) in 16S rRNA + S-adenosyl-L-homocysteine + H(+). Functionally, specifically methylates the N4 position of cytidine in position 1402 (C1402) of 16S rRNA. The sequence is that of Ribosomal RNA small subunit methyltransferase H from Wolbachia pipientis subsp. Culex pipiens (strain wPip).